The sequence spans 543 residues: CTP synthase (543 aa).

The amidoligase domain stretch occupies residues 1 to 265; sequence MARYIFITGG…DDEVLAAFGI (265 aa). Ser-13 lines the CTP pocket. Ser-13 is a binding site for UTP. 14-19 is a binding site for ATP; sequence SLGKGL. Tyr-54 provides a ligand contact to L-glutamine. Asp-71 provides a ligand contact to ATP. The Mg(2+) site is built by Asp-71 and Glu-139. CTP-binding positions include 146–148, 186–191, and Lys-222; these read DIE and KTKPTQ. UTP-binding positions include 186 to 191 and Lys-222; that span reads KTKPTQ. ATP is bound at residue 238-240; the sequence is RDV. One can recognise a Glutamine amidotransferase type-1 domain in the interval 291-542; that stretch reads TIAIVGKYTG…IQAAVVQSRL (252 aa). Gly-353 contacts L-glutamine. Catalysis depends on Cys-380, which acts as the Nucleophile; for glutamine hydrolysis. L-glutamine is bound by residues 381–384, Glu-404, and Arg-470; that span reads FGMQ. Active-site residues include His-515 and Glu-517.

It belongs to the CTP synthase family. Homotetramer.

The enzyme catalyses UTP + L-glutamine + ATP + H2O = CTP + L-glutamate + ADP + phosphate + 2 H(+). It catalyses the reaction L-glutamine + H2O = L-glutamate + NH4(+). It carries out the reaction UTP + NH4(+) + ATP = CTP + ADP + phosphate + 2 H(+). Its pathway is pyrimidine metabolism; CTP biosynthesis via de novo pathway; CTP from UDP: step 2/2. Its activity is regulated as follows. Allosterically activated by GTP, when glutamine is the substrate; GTP has no effect on the reaction when ammonia is the substrate. The allosteric effector GTP functions by stabilizing the protein conformation that binds the tetrahedral intermediate(s) formed during glutamine hydrolysis. Inhibited by the product CTP, via allosteric rather than competitive inhibition. Catalyzes the ATP-dependent amination of UTP to CTP with either L-glutamine or ammonia as the source of nitrogen. Regulates intracellular CTP levels through interactions with the four ribonucleotide triphosphates. This is CTP synthase from Bradyrhizobium sp. (strain BTAi1 / ATCC BAA-1182).